We begin with the raw amino-acid sequence, 191 residues long: Protein Ves (191 aa).

The protein belongs to the Ves family.

This is Protein Ves from Escherichia coli O127:H6 (strain E2348/69 / EPEC).